Here is a 358-residue protein sequence, read N- to C-terminus: Heme A synthase 1 (358 aa).

The next 5 helical transmembrane spans lie at 11-31 (LVGT…VGGG), 98-117 (WGRL…RLRG), 123-143 (LTAW…MGWY), 159-179 (LYLG…LWTA), and 199-219 (LLSV…LVAA). Position 262 (H262) interacts with heme. A run of 3 helical transmembrane segments spans residues 264–284 (VAAT…LRAP), 292–312 (LFLL…STLV), and 315–335 (MAEL…ACIA). Position 322 (H322) interacts with heme.

Belongs to the COX15/CtaA family. Type 2 subfamily. As to quaternary structure, interacts with CtaB. It depends on heme b as a cofactor.

It is found in the cell membrane. The catalysed reaction is Fe(II)-heme o + 2 A + H2O = Fe(II)-heme a + 2 AH2. Its pathway is porphyrin-containing compound metabolism; heme A biosynthesis; heme A from heme O: step 1/1. Catalyzes the conversion of heme O to heme A by two successive hydroxylations of the methyl group at C8. The first hydroxylation forms heme I, the second hydroxylation results in an unstable dihydroxymethyl group, which spontaneously dehydrates, resulting in the formyl group of heme A. This chain is Heme A synthase 1, found in Acidiphilium cryptum (strain JF-5).